The following is a 324-amino-acid chain: tRNA U34 carboxymethyltransferase (324 aa).

Carboxy-S-adenosyl-L-methionine contacts are provided by residues Lys91, Trp105, Lys110, Gly130, 152-154 (DPS), 181-182 (IE), Met196, Tyr200, and Arg315.

Belongs to the class I-like SAM-binding methyltransferase superfamily. CmoB family. Homotetramer.

The enzyme catalyses carboxy-S-adenosyl-L-methionine + 5-hydroxyuridine(34) in tRNA = 5-carboxymethoxyuridine(34) in tRNA + S-adenosyl-L-homocysteine + H(+). Its function is as follows. Catalyzes carboxymethyl transfer from carboxy-S-adenosyl-L-methionine (Cx-SAM) to 5-hydroxyuridine (ho5U) to form 5-carboxymethoxyuridine (cmo5U) at position 34 in tRNAs. This is tRNA U34 carboxymethyltransferase from Aliivibrio fischeri (strain MJ11) (Vibrio fischeri).